A 369-amino-acid chain; its full sequence is tRNA-specific 2-thiouridylase MnmA (369 aa).

Residues 16-23 and Met42 contribute to the ATP site; that span reads AMSGGVDS. Cys110 functions as the Nucleophile in the catalytic mechanism. Cysteines 110 and 206 form a disulfide. Gly134 is an ATP binding site. An interaction with tRNA region spans residues 156 to 158; that stretch reads KDQ. Catalysis depends on Cys206, which acts as the Cysteine persulfide intermediate.

This sequence belongs to the MnmA/TRMU family.

Its subcellular location is the cytoplasm. It catalyses the reaction S-sulfanyl-L-cysteinyl-[protein] + uridine(34) in tRNA + AH2 + ATP = 2-thiouridine(34) in tRNA + L-cysteinyl-[protein] + A + AMP + diphosphate + H(+). Catalyzes the 2-thiolation of uridine at the wobble position (U34) of tRNA, leading to the formation of s(2)U34. This chain is tRNA-specific 2-thiouridylase MnmA, found in Orientia tsutsugamushi (strain Boryong) (Rickettsia tsutsugamushi).